A 94-amino-acid polypeptide reads, in one-letter code: Pyrimidine/purine nucleoside phosphorylase 2 (94 aa).

Belongs to the nucleoside phosphorylase PpnP family.

The catalysed reaction is a purine D-ribonucleoside + phosphate = a purine nucleobase + alpha-D-ribose 1-phosphate. It catalyses the reaction adenosine + phosphate = alpha-D-ribose 1-phosphate + adenine. It carries out the reaction cytidine + phosphate = cytosine + alpha-D-ribose 1-phosphate. The enzyme catalyses guanosine + phosphate = alpha-D-ribose 1-phosphate + guanine. The catalysed reaction is inosine + phosphate = alpha-D-ribose 1-phosphate + hypoxanthine. It catalyses the reaction thymidine + phosphate = 2-deoxy-alpha-D-ribose 1-phosphate + thymine. It carries out the reaction uridine + phosphate = alpha-D-ribose 1-phosphate + uracil. The enzyme catalyses xanthosine + phosphate = alpha-D-ribose 1-phosphate + xanthine. Functionally, catalyzes the phosphorolysis of diverse nucleosides, yielding D-ribose 1-phosphate and the respective free bases. Can use uridine, adenosine, guanosine, cytidine, thymidine, inosine and xanthosine as substrates. Also catalyzes the reverse reactions. The chain is Pyrimidine/purine nucleoside phosphorylase 2 from Psychrobacter cryohalolentis (strain ATCC BAA-1226 / DSM 17306 / VKM B-2378 / K5).